A 1284-amino-acid chain; its full sequence is DNA-directed RNA polymerase subunit beta (1284 aa).

It belongs to the RNA polymerase beta chain family. As to quaternary structure, the RNAP catalytic core consists of 2 alpha, 1 beta, 1 beta' and 1 omega subunit. When a sigma factor is associated with the core the holoenzyme is formed, which can initiate transcription.

The enzyme catalyses RNA(n) + a ribonucleoside 5'-triphosphate = RNA(n+1) + diphosphate. Functionally, DNA-dependent RNA polymerase catalyzes the transcription of DNA into RNA using the four ribonucleoside triphosphates as substrates. The polypeptide is DNA-directed RNA polymerase subunit beta (Mesoplasma florum (strain ATCC 33453 / NBRC 100688 / NCTC 11704 / L1) (Acholeplasma florum)).